The chain runs to 585 residues: NADP-reducing hydrogenase subunit HndD (585 aa).

The 84-residue stretch at 2–85 (SMLTITIDGK…NMVVKTNSLR (84 aa)) folds into the 2Fe-2S ferredoxin-type domain. [2Fe-2S] cluster is bound by residues C36, C52, C55, and C69. In terms of domain architecture, 4Fe-4S His(Cys)3-ligated-type spans 85 to 124 (RVLNARRTVLELLLSDHPKDCLVCAKSGECELQTLAERFG). Residues H101, C105, C108, and C114 each coordinate [4Fe-4S] cluster. 4Fe-4S ferredoxin-type domains follow at residues 144–174 (ASII…VLSG) and 185–216 (PAFE…EHEY).

In terms of assembly, heterotetramer composed of HndA, HndB, HndC and HndD subunits. HndD is probably the hydrogenase subunit. It depends on [4Fe-4S] cluster as a cofactor.

It catalyses the reaction H2 + NADP(+) = NADPH + H(+). Its activity is regulated as follows. Inhibited by oxygen. Catalyzes the reduction of NADP in the presence of molecular H(2) to yield NADPH. The protein is NADP-reducing hydrogenase subunit HndD (hndD) of Solidesulfovibrio fructosivorans (Desulfovibrio fructosivorans).